The sequence spans 280 residues: 2-dehydro-3-deoxyphosphooctonate aldolase 2 (280 aa).

This sequence belongs to the KdsA family.

The protein localises to the cytoplasm. It catalyses the reaction D-arabinose 5-phosphate + phosphoenolpyruvate + H2O = 3-deoxy-alpha-D-manno-2-octulosonate-8-phosphate + phosphate. The protein operates within carbohydrate biosynthesis; 3-deoxy-D-manno-octulosonate biosynthesis; 3-deoxy-D-manno-octulosonate from D-ribulose 5-phosphate: step 2/3. It functions in the pathway bacterial outer membrane biogenesis; lipopolysaccharide biosynthesis. The polypeptide is 2-dehydro-3-deoxyphosphooctonate aldolase 2 (kdsA2) (Pseudomonas putida (strain ATCC 47054 / DSM 6125 / CFBP 8728 / NCIMB 11950 / KT2440)).